Here is a 63-residue protein sequence, read N- to C-terminus: Conotoxin p5a (63 aa).

Positions 1-19 are cleaved as a signal peptide; the sequence is MRCLPVFVILLLLIPSAPC. Positions 20 to 50 are excised as a propeptide; it reads VDAHPKTKDDMPLASFHDNAKGTLQRFWKKR. 2 cysteine pairs are disulfide-bonded: C52–C59 and C53–C60. L62 bears the Leucine amide mark.

As to expression, expressed by the venom duct.

Its subcellular location is the secreted. In terms of biological role, in vivo, low levels of the peptide injected into male specimens of the Siamese fighting fish causes an immediate aggressive display in this fish in response to their reflection when placed in a mirrored aquarium; High levels of the peptide suppressed this behavior. No effect is observed when injected into mice. In Conus purpurascens (Purple cone), this protein is Conotoxin p5a.